The chain runs to 630 residues: Glutathione hydrolase proenzyme 1 (630 aa).

Residues 1–49 are Cytoplasmic-facing; that stretch reads MGINTSSAQSSGAASIARSSVNVKSGNRHLSSNKKSATSALEERASRPS. A helical; Signal-anchor for type II membrane protein transmembrane segment spans residues 50 to 70; that stretch reads ILVTFLVLAGTILSLYIWPIL. The Lumenal segment spans residues 71–630; it reads SPDLFFANQR…SRKQAVAAAY (560 aa). Residue N156 is glycosylated (N-linked (GlcNAc...) asparagine). Residue R165 participates in L-glutamate binding. N180, N315, N397, and N417 each carry an N-linked (GlcNAc...) asparagine glycan. T441 serves as the catalytic Nucleophile. Residues S459, N461, D483, 511 to 512, and 532 to 533 contribute to the L-glutamate site; these read SS and GG. An N-linked (GlcNAc...) asparagine glycan is attached at N612.

It belongs to the gamma-glutamyltransferase family. In terms of assembly, heterodimer composed of the light and heavy chains. The active site is located in the light chain. Cleaved by autocatalysis into a large and a small subunit.

The protein localises to the endoplasmic reticulum membrane. The enzyme catalyses an N-terminal (5-L-glutamyl)-[peptide] + an alpha-amino acid = 5-L-glutamyl amino acid + an N-terminal L-alpha-aminoacyl-[peptide]. It catalyses the reaction glutathione + H2O = L-cysteinylglycine + L-glutamate. It carries out the reaction an S-substituted glutathione + H2O = an S-substituted L-cysteinylglycine + L-glutamate. The protein operates within sulfur metabolism; glutathione metabolism. Functionally, catalyzes the transfer of the gamma-glutamyl moiety of glutathione (GSH) and other gamma-glutamyl compounds to amino acids and peptides. Major GSH-degrading enzyme, catalyzing the hydrolytic release of L-glutamate from GSH. The protein is Glutathione hydrolase proenzyme 1 (ggt1) of Schizosaccharomyces pombe (strain 972 / ATCC 24843) (Fission yeast).